We begin with the raw amino-acid sequence, 120 residues long: Immunoglobulin kappa variable 2D-28 (120 aa).

Positions 1 to 19 (MRLPAQLLGLLMLWVSGSS) are cleaved as a signal peptide. One can recognise an Ig-like domain in the interval 20–120 (GDIVMTQSPL…YYCMQALQTP (101 aa)). The framework-1 stretch occupies residues 21-43 (DIVMTQSPLSLPVTPGEPASISC). An intrachain disulfide couples cysteine 43 to cysteine 113. Residues 44–59 (RSSQSLLHSNGYNYLD) form a complementarity-determining-1 region. The framework-2 stretch occupies residues 60–74 (WYLQKPGQSPQLLIY). Positions 75–81 (LGSNRAS) are complementarity-determining-2. The segment at 82 to 113 (GVPDRFSGSGSGTDFTLKISRVEAEDVGVYYC) is framework-3. The tract at residues 114–120 (MQALQTP) is complementarity-determining-3.

Immunoglobulins are composed of two identical heavy chains and two identical light chains; disulfide-linked.

Its subcellular location is the secreted. The protein resides in the cell membrane. In terms of biological role, v region of the variable domain of immunoglobulin light chains that participates in the antigen recognition. Immunoglobulins, also known as antibodies, are membrane-bound or secreted glycoproteins produced by B lymphocytes. In the recognition phase of humoral immunity, the membrane-bound immunoglobulins serve as receptors which, upon binding of a specific antigen, trigger the clonal expansion and differentiation of B lymphocytes into immunoglobulins-secreting plasma cells. Secreted immunoglobulins mediate the effector phase of humoral immunity, which results in the elimination of bound antigens. The antigen binding site is formed by the variable domain of one heavy chain, together with that of its associated light chain. Thus, each immunoglobulin has two antigen binding sites with remarkable affinity for a particular antigen. The variable domains are assembled by a process called V-(D)-J rearrangement and can then be subjected to somatic hypermutations which, after exposure to antigen and selection, allow affinity maturation for a particular antigen. This Homo sapiens (Human) protein is Immunoglobulin kappa variable 2D-28.